Consider the following 102-residue polypeptide: Small ribosomal subunit protein uS10 (102 aa).

The protein belongs to the universal ribosomal protein uS10 family. Part of the 30S ribosomal subunit.

Its function is as follows. Involved in the binding of tRNA to the ribosomes. The sequence is that of Small ribosomal subunit protein uS10 from Mycoplasma capricolum subsp. capricolum (strain California kid / ATCC 27343 / NCTC 10154).